Reading from the N-terminus, the 263-residue chain is Chromosomal replication initiator protein DnaA (263 aa).

Glu-1 is a region of interest (domain I, interacts with DnaA modulators). Residue Glu-1 is a region of interest, domain II. The domain III, AAA+ region stretch occupies residues 1–179 (ESGMGKTHLL…GSVSRLNFWS (179 aa)). ATP is bound by residues Gly-3, Gly-5, Lys-6, and Thr-7. The segment at 180–263 (QQNPEEKIIT…HTLAQIGEEF (84 aa)) is domain IV, binds dsDNA.

It belongs to the DnaA family. As to quaternary structure, oligomerizes as a right-handed, spiral filament on DNA at oriC.

Its subcellular location is the cytoplasm. Plays an essential role in the initiation and regulation of chromosomal replication. ATP-DnaA binds to the origin of replication (oriC) to initiate formation of the DNA replication initiation complex once per cell cycle. Binds the DnaA box (a 9 base pair repeat at the origin) and separates the double-stranded (ds)DNA. Forms a right-handed helical filament on oriC DNA; dsDNA binds to the exterior of the filament while single-stranded (ss)DNA is stabiized in the filament's interior. The ATP-DnaA-oriC complex binds and stabilizes one strand of the AT-rich DNA unwinding element (DUE), permitting loading of DNA polymerase. After initiation quickly degrades to an ADP-DnaA complex that is not apt for DNA replication. Binds acidic phospholipids. The chain is Chromosomal replication initiator protein DnaA from Mycoplasma mycoides.